Here is a 188-residue protein sequence, read N- to C-terminus: Putative pre-16S rRNA nuclease (188 aa).

The segment at 156 to 188 (LRQGDAAPGGSDDERDEDGDTDGEDGGGDGGGE) is disordered. Positions 166-188 (SDDERDEDGDTDGEDGGGDGGGE) are enriched in acidic residues.

The protein belongs to the YqgF nuclease family.

The protein localises to the cytoplasm. Its function is as follows. Could be a nuclease involved in processing of the 5'-end of pre-16S rRNA. This chain is Putative pre-16S rRNA nuclease, found in Rhodospirillum centenum (strain ATCC 51521 / SW).